Reading from the N-terminus, the 158-residue chain is N-alpha-acetyltransferase RimI (158 aa).

Residues 8 to 155 enclose the N-acetyltransferase domain; it reads VTIGALTRAD…DAYTMRRDSG (148 aa).

The protein belongs to the acetyltransferase family. RimI subfamily. Monomer. Interacts with TsaD. Interacts with GroS/GroES.

The enzyme catalyses N-terminal L-methionyl-L-alanyl-[protein] + acetyl-CoA = N-terminal N(alpha)-acetyl-L-methionyl-L-alanyl-[protein] + CoA + H(+). The catalysed reaction is N-terminal L-methionyl-L-seryl-[protein] + acetyl-CoA = N-terminal N(alpha)-acetyl-L-methionyl-L-seryl-[protein] + CoA + H(+). It catalyses the reaction N-terminal L-methionyl-L-valyl-[protein] + acetyl-CoA = N-terminal N(alpha)-acetyl-L-methionyl-L-valyl-[protein] + CoA + H(+). It carries out the reaction N-terminal L-methionyl-L-threonyl-[protein] + acetyl-CoA = N-terminal N(alpha)-acetyl-L-methionyl-L-threonyl-[protein] + CoA + H(+). The enzyme catalyses N-terminal L-methionyl-L-lysyl-[protein] + acetyl-CoA = N-terminal N(alpha)-acetyl-L-methionyl-L-lysyl-[protein] + CoA + H(+). The catalysed reaction is N-terminal L-methionyl-L-leucyl-[protein] + acetyl-CoA = N-terminal N(alpha)-acetyl-L-methionyl-L-leucyl-[protein] + CoA + H(+). It catalyses the reaction N-terminal L-methionyl-L-phenylalanyl-[protein] + acetyl-CoA = N-terminal N(alpha)-acetyl-L-methionyl-L-phenylalanyl-[protein] + CoA + H(+). It carries out the reaction N-terminal L-methionyl-L-tyrosyl-[protein] + acetyl-CoA = N-terminal N(alpha)-acetyl-L-methionyl-L-tyrosyl-[protein] + CoA + H(+). The enzyme catalyses N-terminal glycyl-[protein] + acetyl-CoA = N-terminal N(alpha)-acetylglycyl-[protein] + CoA + H(+). The catalysed reaction is N-terminal L-alanyl-[protein] + acetyl-CoA = N-terminal N(alpha)-acetyl-L-alanyl-[protein] + CoA + H(+). It catalyses the reaction N-terminal L-seryl-[protein] + acetyl-CoA = N-terminal N(alpha)-acetyl-L-seryl-[protein] + CoA + H(+). It carries out the reaction N-terminal L-valyl-[protein] + acetyl-CoA = N-terminal N(alpha)-acetyl-L-valyl-[protein] + CoA + H(+). The enzyme catalyses N-terminal L-cysteinyl-[protein] + acetyl-CoA = N-terminal N(alpha)-acetyl-L-cysteinyl-[protein] + CoA + H(+). The catalysed reaction is N-terminal L-threonyl-[protein] + acetyl-CoA = N-terminal N(alpha)-acetyl-L-threonyl-[protein] + CoA + H(+). Functionally, N-alpha-acetyltransferase that specifically mediates the acetylation of N-terminal residues. Able to mediate acetylation of a wide variety of N-terminal residues, with preference for hydrophobic N-termini. Acetylates GroS/GroES and GroEL1. Able to acetylate the ribosomal protein bS18, but it is unclear whether it acetylates its N-terminal alanine residue. The sequence is that of N-alpha-acetyltransferase RimI from Mycobacterium tuberculosis (strain ATCC 25618 / H37Rv).